The primary structure comprises 748 residues: Translation factor GUF1 homolog 2, mitochondrial (748 aa).

A mitochondrion-targeting transit peptide spans 1 to 29 (MRVGCCLLLKPLRQRLCTASISSRHIMRW). One can recognise a tr-type G domain in the interval 94–276 (SHIRNVAVVA…AIIERVPPPT (183 aa)). GTP contacts are provided by residues 103 to 110 (AHVDHGKT), 167 to 171 (DTPGH), and 221 to 224 (TKMD).

This sequence belongs to the TRAFAC class translation factor GTPase superfamily. Classic translation factor GTPase family. LepA subfamily.

It is found in the mitochondrion inner membrane. It catalyses the reaction GTP + H2O = GDP + phosphate + H(+). Functionally, promotes mitochondrial protein synthesis. May act as a fidelity factor of the translation reaction, by catalyzing a one-codon backward translocation of tRNAs on improperly translocated ribosomes. Binds to mitochondrial ribosomes in a GTP-dependent manner. This Trypanosoma cruzi (strain CL Brener) protein is Translation factor GUF1 homolog 2, mitochondrial.